The chain runs to 102 residues: uncharacterized protein (102 aa).

A run of 2 helical transmembrane segments spans residues 38–58 and 64–84; these read FYVW…QLIL and VLFL…LFQF.

It localises to the membrane. This is an uncharacterized protein from Saccharomyces cerevisiae (strain ATCC 204508 / S288c) (Baker's yeast).